Here is a 221-residue protein sequence, read N- to C-terminus: PKHD-type hydroxylase P9303_20491 (221 aa).

A Fe2OG dioxygenase domain is found at 80–174; it reads HIHGVMFSRS…RLVCVGWIQS (95 aa). Positions 98, 100, and 155 each coordinate Fe cation. Arg165 contacts 2-oxoglutarate.

Fe(2+) serves as cofactor. L-ascorbate is required as a cofactor.

In Prochlorococcus marinus (strain MIT 9303), this protein is PKHD-type hydroxylase P9303_20491.